An 82-amino-acid chain; its full sequence is RNA-binding protein Hfq (82 aa).

One can recognise a Sm domain in the interval 9–68 (DPYLNTLRKERVPVSIYLVNGIKLQGQIESFDQFVILLKNTVSQMVYKHAISTVVPSRPV).

This sequence belongs to the Hfq family. In terms of assembly, homohexamer.

In terms of biological role, RNA chaperone that binds small regulatory RNA (sRNAs) and mRNAs to facilitate mRNA translational regulation in response to envelope stress, environmental stress and changes in metabolite concentrations. Also binds with high specificity to tRNAs. This Pseudomonas aeruginosa (strain LESB58) protein is RNA-binding protein Hfq.